The following is a 477-amino-acid chain: 3-isopropylmalate dehydratase large subunit (477 aa).

[4Fe-4S] cluster is bound by residues Cys-352, Cys-413, and Cys-416.

The protein belongs to the aconitase/IPM isomerase family. LeuC type 1 subfamily. As to quaternary structure, heterodimer of LeuC and LeuD. Requires [4Fe-4S] cluster as cofactor.

It carries out the reaction (2R,3S)-3-isopropylmalate = (2S)-2-isopropylmalate. It functions in the pathway amino-acid biosynthesis; L-leucine biosynthesis; L-leucine from 3-methyl-2-oxobutanoate: step 2/4. Its function is as follows. Catalyzes the isomerization between 2-isopropylmalate and 3-isopropylmalate, via the formation of 2-isopropylmaleate. This Pseudomonas putida (strain ATCC 47054 / DSM 6125 / CFBP 8728 / NCIMB 11950 / KT2440) protein is 3-isopropylmalate dehydratase large subunit.